Reading from the N-terminus, the 82-residue chain is uncharacterized protein (82 aa).

Positions 1–20 (MMNLSPPFKSPSGSSRAGRR) are disordered.

This is an uncharacterized protein from Archaeoglobus fulgidus (strain ATCC 49558 / DSM 4304 / JCM 9628 / NBRC 100126 / VC-16).